We begin with the raw amino-acid sequence, 187 residues long: MASTADIKNGIVINIDGQLWSVIEFQHVKPGKGGAFVRTKLKNVTTGKTVDRTYNAGAKIDITNVDRRDYQYLYQDGADFVFMDTSDYDQITIPGPIVGDAANFMLENQNVTVALHEGSPLYVELPASVVLEITYTEPGLQGDRSTGGTKPATVQTGYQIQVPLFLETGTKVRVDTRTGDYLGRVND.

This sequence belongs to the elongation factor P family.

It localises to the cytoplasm. It participates in protein biosynthesis; polypeptide chain elongation. In terms of biological role, involved in peptide bond synthesis. Stimulates efficient translation and peptide-bond synthesis on native or reconstituted 70S ribosomes in vitro. Probably functions indirectly by altering the affinity of the ribosome for aminoacyl-tRNA, thus increasing their reactivity as acceptors for peptidyl transferase. This Leifsonia xyli subsp. xyli (strain CTCB07) protein is Elongation factor P.